A 687-amino-acid polypeptide reads, in one-letter code: Dictomallein (687 aa).

2 disordered regions span residues 1 to 45 (MGNG…SRRL) and 73 to 112 (TAGG…STSA). In terms of domain architecture, Peptidase M66 spans 233–501 (PVFGTDADVQ…QAWIASRVLA (269 aa)). Position 393 (His393) interacts with Zn(2+). Glu394 is an active-site residue. Positions 397 and 403 each coordinate Zn(2+).

This sequence belongs to the dictomallein family. It depends on Zn(2+) as a cofactor.

The polypeptide is Dictomallein (dtmL) (Burkholderia pseudomallei (strain 1710b)).